The following is a 683-amino-acid chain: Methionine--tRNA ligase (683 aa).

The 'HIGH' region motif lies at Tyr15–Asn25. The 'KMSKS' region motif lies at Lys311 to Ser315. Position 314 (Lys314) interacts with ATP. The 103-residue stretch at Asp581–Ser683 folds into the tRNA-binding domain.

It belongs to the class-I aminoacyl-tRNA synthetase family. MetG type 2B subfamily. Homodimer.

It is found in the cytoplasm. It carries out the reaction tRNA(Met) + L-methionine + ATP = L-methionyl-tRNA(Met) + AMP + diphosphate. Functionally, is required not only for elongation of protein synthesis but also for the initiation of all mRNA translation through initiator tRNA(fMet) aminoacylation. The sequence is that of Methionine--tRNA ligase from Lactiplantibacillus plantarum (strain ATCC BAA-793 / NCIMB 8826 / WCFS1) (Lactobacillus plantarum).